The following is a 392-amino-acid chain: Zinc finger protein ham-2 (392 aa).

C2H2-type zinc fingers lie at residues 16–39 (FPCSICQKVFCHSSSLSRHRMQAH) and 43–66 (YTCTTCNNEIPSNDTLRSHMYRVH). Residues 72 to 95 (FMCRCCNWAFPDKTSLHIHMQSML) form a C2H2-type 3; degenerate zinc finger. 2 disordered regions span residues 106-130 (LAKSSDVVDSTSESGSPRQSPPFSP) and 278-303 (HISHDQPSPTVSDSHISGGSSSHSGE). A compositionally biased stretch (polar residues) spans 112–123 (VVDSTSESGSPR). Residues 289–303 (SDSHISGGSSSHSGE) are compositionally biased toward low complexity.

It localises to the nucleus. Functionally, probable transcription factor that acts downstream of egl-15, to promote migration of the HSN motor neurons from the tail to the gonad primordium during HSN cell differentiation. The chain is Zinc finger protein ham-2 from Caenorhabditis elegans.